Consider the following 208-residue polypeptide: Uridine kinase (208 aa).

11–18 (GGTGSGKS) serves as a coordination point for ATP.

It belongs to the uridine kinase family.

Its subcellular location is the cytoplasm. The catalysed reaction is uridine + ATP = UMP + ADP + H(+). It carries out the reaction cytidine + ATP = CMP + ADP + H(+). It functions in the pathway pyrimidine metabolism; CTP biosynthesis via salvage pathway; CTP from cytidine: step 1/3. Its pathway is pyrimidine metabolism; UMP biosynthesis via salvage pathway; UMP from uridine: step 1/1. This Clostridium perfringens (strain SM101 / Type A) protein is Uridine kinase.